A 154-amino-acid polypeptide reads, in one-letter code: Bacterial ferritin (154 aa).

The 145-residue stretch at 1-145 (MQGNQAVVDY…QQLRLIELIG (145 aa)) folds into the Ferritin-like diiron domain. Fe cation contacts are provided by Glu-18, Glu-51, His-54, Glu-93, Glu-127, and His-130.

It belongs to the bacterioferritin family. Forms a bacterioferritin (BFR) complex with BfrB. Heterooligomer of 24 subunits, arranged as 12 dimers, that are packed together to form an approximately spherical molecule with a central cavity, in which large amounts of iron can be deposited.

Its subcellular location is the cytoplasm. It catalyses the reaction 4 Fe(2+) + O2 + 4 H(+) = 4 Fe(3+) + 2 H2O. The catalysed reaction is Fe(2+)(in) = Fe(2+)(out). In terms of biological role, iron-storage protein. Its ferroxidase center binds Fe(2+), oxidizes it using dioxygen to Fe(3+), and participates in the subsequent Fe(3+) oxide mineral core formation within the central cavity of the BFR protein shell. Plays a role in protection against iron-mediated oxidative stress. The sequence is that of Bacterial ferritin from Neisseria gonorrhoeae.